The sequence spans 928 residues: MKDSVDCPSILPTDRTSVLSETSTLVGSSSHVYSRHAPMNSYHNSMNSNIYHSPKASSPLVSYKTSSPVLLKRATAPVLPSFKPKEQRYNKPQGCSLITAVELGKIIETLPDEKVLLLDVRPFTEHAKSIITNSIHVCLPSTLLRRKNFTFSKLLDNLTPSEQSVLKSKLAIDNLRIIIYDSTANQTESSVSLPCYGIASKLIEFDTNVKKTVSILMCGFPQFKILFPDHINTNTFNSDCISSAEPKSPKTNLMNSLHNTAPHMTATTPLSSPQMNLKLKVPDDSRSDHSNFSSSPSPRNVLSDSPMSSSSPISALFKFQLPAPQTNINQMFKFSQNEEIMGLETYLSAVNIKEEHERWYNNDSAKKSLQNFQFPKNQNSLEKDTNKDKLGFQIRYENLSKNYEKEVIDSVIPEWFQHLMSIPKIELVSQFQKLDFLEKRRLNHSVSFRKKENSFILEKPSSYPEQLTSTSSSTIMPPKFPDVNKVQKRSHSQPIFTQYSKYKSMLSLESDSDSESDDVIISSGVELGAKNRYKDIFPYEHSRVILKKGLQSSKGIKHSHSTSDGGILDNYINANYLSLPRFSVEQNSSFQTTTTTTRRVRYIATQAPMPSTVHDFYTCILNNGVPLVLSLTNDFENGIEKCYRYWQEGNYNGIHVKLLEKKILKMPSTTSMRKNTMGTQNSSLYSAGVQGNSSNYSTDNDNDNDNNNNNNNNSNIAVTAAACDDDDDDDDDAILIRKILLTYHDQEKPYELLQIQVKNWPDLGTLLNPISILQAINVKNHIIDTLFARNYYQNDQLPTILVHCSAGCGRTGTLCTIDSILSNFEMFEMLQKEFVKLKYPAKLFDPISWTINIFRKQRISMVQNINQFIFIYDCLLFYFRLRLDDITERTDGDGSNKDNISLSALIEQIEKLEILQTFVDDKLKELPQ.

T75 bears the Phosphothreonine mark. Positions 111-232 (PDEKVLLLDV…FKILFPDHIN (122 aa)) constitute a Rhodanese domain. A disordered region spans residues 247–307 (KSPKTNLMNS…PRNVLSDSPM (61 aa)). S248 is modified (phosphoserine). 2 stretches are compositionally biased toward polar residues: residues 249-259 (PKTNLMNSLHN) and 265-275 (TATTPLSSPQM). The span at 280–289 (KVPDDSRSDH) shows a compositional bias: basic and acidic residues. Residues 290–307 (SNFSSSPSPRNVLSDSPM) show a composition bias toward low complexity. S297 and S368 each carry phosphoserine. Disordered stretches follow at residues 467 to 487 (LTST…NKVQ) and 672 to 713 (MRKN…NNNN). A Tyrosine-protein phosphatase domain is found at 502–878 (YKSMLSLESD…IFIYDCLLFY (377 aa)). Over residues 672 to 691 (MRKNTMGTQNSSLYSAGVQG) the composition is skewed to polar residues. Positions 692-713 (NSSNYSTDNDNDNDNNNNNNNN) are enriched in low complexity. Residue C804 is the Phosphocysteine intermediate of the active site.

Belongs to the protein-tyrosine phosphatase family. Non-receptor class subfamily. As to quaternary structure, interacts with HOG1.

It is found in the cytoplasm. The catalysed reaction is O-phospho-L-tyrosyl-[protein] + H2O = L-tyrosyl-[protein] + phosphate. Its function is as follows. Major phosphatase responsible for tyrosine dephosphorylation of MAP kinases FUS3 and HOG1 to inactivate their activity; it also has important roles, along with MSG5, in the inactivation of FUS3 following pheromone stimulation. The protein is Tyrosine-protein phosphatase 3 (PTP3) of Saccharomyces cerevisiae (strain ATCC 204508 / S288c) (Baker's yeast).